The primary structure comprises 260 residues: Small ribosomal subunit protein uS2 (260 aa).

The segment at 223–260 (EGRQGEDEEEASQEVAEGVSKDSLEDLKKSVEEGSNEE) is disordered. The segment covering 241 to 254 (VSKDSLEDLKKSVE) has biased composition (basic and acidic residues).

The protein belongs to the universal ribosomal protein uS2 family.

This chain is Small ribosomal subunit protein uS2, found in Pediococcus pentosaceus (strain ATCC 25745 / CCUG 21536 / LMG 10740 / 183-1w).